Here is a 312-residue protein sequence, read N- to C-terminus: Non-structural protein 12A (312 aa).

Residues 1-23 (MFKSGSGSLKRSGSISSVKSFSG) show a composition bias toward low complexity. Disordered regions lie at residues 1–37 (MFKS…RGSV), 63–97 (VPEK…YNQN), and 114–162 (KGRG…TGDG). Residues 63 to 73 (VPEKTKSEGNL) are compositionally biased toward basic and acidic residues. Residues 74-97 (KNKSSVITGNFESSGPTNAHYNQN) show a composition bias toward polar residues. The segment covering 122–134 (DARHTATDSRLSQ) has biased composition (basic and acidic residues).

It belongs to the phytoreovirus non-structural protein Pns12A family.

The protein resides in the host cytoplasm. In terms of biological role, constituent of viral factories. The chain is Non-structural protein 12A from Rice dwarf virus (isolate Fujian) (RDV).